The primary structure comprises 549 residues: Hydroxylamine reductase (549 aa).

[4Fe-4S] cluster is bound by residues cysteine 3, cysteine 6, cysteine 15, and cysteine 21. The hybrid [4Fe-2O-2S] cluster site is built by histidine 248, glutamate 272, cysteine 316, cysteine 403, cysteine 431, cysteine 456, glutamate 490, and lysine 492. The residue at position 403 (cysteine 403) is a Cysteine persulfide.

It belongs to the HCP family. [4Fe-4S] cluster is required as a cofactor. Hybrid [4Fe-2O-2S] cluster serves as cofactor.

It is found in the cytoplasm. It catalyses the reaction A + NH4(+) + H2O = hydroxylamine + AH2 + H(+). In terms of biological role, catalyzes the reduction of hydroxylamine to form NH(3) and H(2)O. The sequence is that of Hydroxylamine reductase from Rhodospirillum rubrum (strain ATCC 11170 / ATH 1.1.1 / DSM 467 / LMG 4362 / NCIMB 8255 / S1).